The sequence spans 264 residues: Glycerol uptake facilitator protein (264 aa).

Residues Met1 to Lys3 lie on the Cytoplasmic side of the membrane. A helical transmembrane segment spans residues Ser4–Val32. At Ala33 to Phe37 the chain is on the periplasmic side. A helical transmembrane segment spans residues Gly38–Ala58. At Gly59–Ser61 the chain is on the cytoplasmic side. Residues Gly62–Leu65 lie within the membrane without spanning it. Residues Asn66–Ala68 carry the NPA 1 motif. Positions Asn66–Phe76 form an intramembrane region, helical. Residues Ala77 to Lys82 lie on the Cytoplasmic side of the membrane. Residues Lys83 to Tyr106 form a helical membrane-spanning segment. The Periplasmic segment spans residues Arg107–Leu141. A helical membrane pass occupies residues Ser142–Asp167. The Cytoplasmic portion of the chain corresponds to Gly168–Pro175. Residues Leu176–Met192 form a helical membrane-spanning segment. Over Gly193–Thr196 the chain is Periplasmic. The stretch at Gly197–Met200 is an intramembrane region. The NPA 2 signature appears at Asn201 to Ala203. Residues Asn201–Leu214 constitute an intramembrane region (helical). Residues Ala215 to Pro229 lie on the Periplasmic side of the membrane. Residues Tyr230–Ala252 form a helical membrane-spanning segment. Residues Ile253–Glu264 are Cytoplasmic-facing.

The protein belongs to the MIP/aquaporin (TC 1.A.8) family.

The protein resides in the cell inner membrane. It carries out the reaction glycerol(in) = glycerol(out). Its function is as follows. Mediates glycerol diffusion across the cytoplasmic membrane via a pore-type mechanism. This is Glycerol uptake facilitator protein (glpF) from Haemophilus influenzae (strain ATCC 51907 / DSM 11121 / KW20 / Rd).